Here is a 185-residue protein sequence, read N- to C-terminus: Inner membrane-spanning protein YciB (185 aa).

5 helical membrane passes run 19-39 (LGGV…QIVI), 53-73 (IMAS…EIRY), 76-96 (WKVT…QFQF), 118-138 (TLNF…IYIS), and 149-169 (FKSF…GVYI).

Belongs to the YciB family.

It localises to the cell inner membrane. In terms of biological role, plays a role in cell envelope biogenesis, maintenance of cell envelope integrity and membrane homeostasis. The sequence is that of Inner membrane-spanning protein YciB from Haemophilus influenzae (strain PittEE).